Consider the following 446-residue polypeptide: tRNA-2-methylthio-N(6)-dimethylallyladenosine synthase (446 aa).

Residues 5-121 form the MTTase N-terminal domain; that stretch reads KYLYVETFGC…LPEIVRAAER (117 aa). [4Fe-4S] cluster is bound by residues cysteine 14, cysteine 50, cysteine 84, cysteine 159, cysteine 163, and cysteine 166. The Radical SAM core domain maps to 145-375; that stretch reads GEGGVTRFVT…QTLQQQMKRE (231 aa). A TRAM domain is found at 378–440; that stretch reads ISFVGTRQLV…QNSLLGEIVT (63 aa).

Belongs to the methylthiotransferase family. MiaB subfamily. Monomer. [4Fe-4S] cluster is required as a cofactor.

The protein resides in the cytoplasm. The catalysed reaction is N(6)-dimethylallyladenosine(37) in tRNA + (sulfur carrier)-SH + AH2 + 2 S-adenosyl-L-methionine = 2-methylsulfanyl-N(6)-dimethylallyladenosine(37) in tRNA + (sulfur carrier)-H + 5'-deoxyadenosine + L-methionine + A + S-adenosyl-L-homocysteine + 2 H(+). Functionally, catalyzes the methylthiolation of N6-(dimethylallyl)adenosine (i(6)A), leading to the formation of 2-methylthio-N6-(dimethylallyl)adenosine (ms(2)i(6)A) at position 37 in tRNAs that read codons beginning with uridine. The sequence is that of tRNA-2-methylthio-N(6)-dimethylallyladenosine synthase from Geobacter sulfurreducens (strain ATCC 51573 / DSM 12127 / PCA).